The sequence spans 230 residues: Osmotin-like protein PR-5x (230 aa).

The N-terminal stretch at 1–25 (MYTNMGYLTSSFIFFFLALVTYTYA) is a signal peptide. Disulfide bonds link cysteine 34–cysteine 229, cysteine 76–cysteine 86, cysteine 91–cysteine 97, cysteine 145–cysteine 217, cysteine 150–cysteine 200, cysteine 158–cysteine 168, cysteine 172–cysteine 181, and cysteine 182–cysteine 187.

This sequence belongs to the thaumatin family.

It is found in the secreted. Its subcellular location is the vacuole. It carries out the reaction Endohydrolysis of (1-&gt;3)- or (1-&gt;4)-linkages in beta-D-glucans when the glucose residue whose reducing group is involved in the linkage to be hydrolyzed is itself substituted at C-3.. Antifungal protein. May bind to beta-glucans and have beta-1,3-D-glucanase activity. The chain is Osmotin-like protein PR-5x from Solanum lycopersicum (Tomato).